Reading from the N-terminus, the 1454-residue chain is ABC transporter G family member 43 (1454 aa).

The segment at 23-47 (ARSLRDGDDPFRRSAAASRRDAGDD) is disordered. The segment covering 25-44 (SLRDGDDPFRRSAAASRRDA) has biased composition (basic and acidic residues). The N-linked (GlcNAc...) asparagine glycan is linked to Asn-163. Positions 170–444 (EGLVSLFISS…FESAGFRCPE (275 aa)) constitute an ABC transporter 1 domain. ATP is bound at residue 204–211 (GPPSSGKS). A glycan (N-linked (GlcNAc...) asparagine) is linked at Asn-393. The region spanning 524–735 (LKAVMSREWL…SNNALSVNEF (212 aa)) is the ABC transmembrane type-2 1 domain. Transmembrane regions (helical) follow at residues 540-560 (FLFI…MTLF), 577-597 (VGAL…ELQL), 613-630 (FFPA…KVPL), 637-656 (LWIV…GRFF), 659-679 (FLAY…LGAI), and 684-704 (VVAN…GGFL). Residue Asn-745 is glycosylated (N-linked (GlcNAc...) asparagine). Residues 775–795 (IGAMIGFMIVFNILYLCALTF) traverse the membrane as a helical segment. The interval 804–823 (TVVSDDDTKSELEAESNQEQ) is disordered. N-linked (GlcNAc...) asparagine glycans are attached at residues Asn-829 and Asn-832. The 253-residue stretch at 852–1104 (LSFNHMNYYV…ILVEYFEAIP (253 aa)) folds into the ABC transporter 2 domain. 897–904 (GVSGAGKT) provides a ligand contact to ATP. Residue Asn-951 is glycosylated (N-linked (GlcNAc...) asparagine). The region spanning 1178–1391 (QCVANTWKQF…TIYGVIASQF (214 aa)) is the ABC transmembrane type-2 2 domain. 7 helical membrane passes run 1196-1216 (YNAM…TVFW), 1236-1256 (YAAV…VVSV), 1284-1304 (FCYS…MIGY), 1314-1334 (FLFF…MLVA), 1341-1361 (LAAV…GFII), 1372-1392 (WFYW…SQFA), and 1423-1443 (FLGY…FLFG).

This sequence belongs to the ABC transporter superfamily. ABCG family. PDR (TC 3.A.1.205) subfamily. Specifically expressed in the vasculature of roots, stems, panicles, sheaths and leaves.

The protein resides in the cell membrane. ABC transporter modulating cadmium (Cd) import, thus controlling Cd(2+) accumulation to prevent phytotoxicity. Confers high tolerance to Cd in yeast. Prevents leaf bacteria proliferation, such as Xanthomonas oryzae pv. oryzicola (Xoc) RS105 and X.oryzae pv. oryzae (Xoo) PXO99, by triggering Cd accumulation, which in turn impairs bacterial virulence factors. This is ABC transporter G family member 43 from Oryza sativa subsp. japonica (Rice).